We begin with the raw amino-acid sequence, 705 residues long: Elongation factor G (705 aa).

A tr-type G domain is found at 8 to 294 (ELCRNFGIMA…SVIDYLPSPL (287 aa)). GTP is bound by residues 17–24 (AHIDAGKT), 92–96 (DTPGH), and 146–149 (NKMD).

Belongs to the TRAFAC class translation factor GTPase superfamily. Classic translation factor GTPase family. EF-G/EF-2 subfamily.

The protein resides in the cytoplasm. Functionally, catalyzes the GTP-dependent ribosomal translocation step during translation elongation. During this step, the ribosome changes from the pre-translocational (PRE) to the post-translocational (POST) state as the newly formed A-site-bound peptidyl-tRNA and P-site-bound deacylated tRNA move to the P and E sites, respectively. Catalyzes the coordinated movement of the two tRNA molecules, the mRNA and conformational changes in the ribosome. The sequence is that of Elongation factor G from Cereibacter sphaeroides (strain ATCC 17023 / DSM 158 / JCM 6121 / CCUG 31486 / LMG 2827 / NBRC 12203 / NCIMB 8253 / ATH 2.4.1.) (Rhodobacter sphaeroides).